The chain runs to 49 residues: Single-stranded DNA-binding protein (49 aa).

Homodimer in the absence of DNA, monomer when binding DNA.

Functionally, binds preferentially to single-stranded DNA and therefore, destabilizes double-stranded DNA. It is involved in DNA replication, repair and recombination. Binds ss-DNA as the replication fork advances and stimulates the replisome processivity and accuracy. The sequence is that of Single-stranded DNA-binding protein (32) from Enterobacteria phage RB9 (Bacteriophage RB9).